Reading from the N-terminus, the 836-residue chain is Protein IWS1 homolog A (836 aa).

Positions 1 to 542 (MEADNYSPEH…DMKSGKMGDY (542 aa)) are disordered. Basic and acidic residues-rich tracts occupy residues 20-36 (QDERDSASDDEGNEQRS), 43-122 (HQSE…DRSP), 133-148 (EPVRHSASDSEDDVPR), 157-186 (DERHIKKTASDSEDEAPAKHRVSDTEDKAP), 206-218 (DSKDEAPPKHAAS), 288-309 (VPVKRAASDSEEETHPKGKASD), 370-386 (RSSESDSSDKVDGKKLQ), and 458-469 (ERKSKTETKSAD). Over residues 476–485 (SDSENEEENL) the composition is skewed to acidic residues. The segment covering 533-542 (DMKSGKMGDY) has biased composition (basic and acidic residues). The region spanning 631–709 (SAIKEWLTPL…NEWSRPIFGL (79 aa)) is the TFIIS N-terminal domain. A disordered region spans residues 714–746 (KGMTREEREQRDIEQMPQRRRMSSSGGQTPRRD). Positions 716–727 (MTREEREQRDIE) are enriched in basic and acidic residues.

The protein belongs to the IWS1 family.

It localises to the nucleus. In terms of biological role, transcription factor which plays a key role in defining the composition of the RNA polymerase II (RNAPII) elongation complex and in modulating the production of mature mRNA transcripts. This is Protein IWS1 homolog A (iws1-a) from Xenopus laevis (African clawed frog).